The chain runs to 885 residues: MKNKYKETLNIPQDVLPMRANLIEKELKFKTFWDQNKIYQKALEKNKTNKPFILHDGPPYANGDLHIGHALNKILKDIVVRYKSLSGFYAPFVPGWDTHGLPIENKILKELKIDDHKNISTLELRKQAREYALSQIKNQKKQFLTMQLFSDFKDYYQTLDPKFEAEQLKVFKKMALDGLIYKSLQPVFWSPSSQSALAEAEVEYHEHKSHSIYTAFKIVKGNKFVEKNDFLVIWTTTPWTLIANSGVSVKEEFSYSKINYENKNYIFATDLVQKVTEIFGWKNFKIISSFQGKDLVGIEYQRPIKQEKTAPIVLGHHVTLESGSGLVHMAPLFGLDDFIIGRVEKLEEIMHINDDGSINEFGNQFANKFYWDANPEINEFLKQNNLLLHHSFLYHSYPHDWRTNKPVIYRGSNQWFVSIDPIKEKITKSIEHVESYPTWGISRLKTMIDNRTSWTISRQRAWGVPIPIFYNEKNEPVFEEELFDHIIDLVSKYGTDIWFEKSTDELLPEKYKNKNWTKEKDIMDVWFDSGTTSMGVKIEGAPVPWDVYLEGSDQYRGWFNSSLINSVVYYNQAPFKKLVSHGFVLDEKGNKMSKSKGNVVLPQEIISKFGADILRLWVANSEYTSDVTIGENIINQNVEIYRKFRNTFRFLIANLVDFDYKKDLKELTGIHLLIKEQLETLKFNTKIAYENFQFTNVIKLTNNFVYNLSSFYLDFSKDILYANKIEDLQRKMIQTNFYNITKTLLLILAPILPTTIEEVYQIFDQANKKESVHLENFFGISSIETIQEEKWNSFFELKNKVYALIEIAIKDKLIKSANQALVYIKETDEFLKTLDLKNLLMVGKVIFSKENKIENYEGHLCERCRIYFDFIDKDNLCVRCSKVIL.

The 'HIGH' region motif lies at 59 to 69 (PYANGDLHIGH). An L-isoleucyl-5'-AMP-binding site is contributed by Glu550. A 'KMSKS' region motif is present at residues 591-595 (KMSKS). Residue Lys594 participates in ATP binding. Cys861, Cys864, Cys877, and Cys880 together coordinate Zn(2+).

This sequence belongs to the class-I aminoacyl-tRNA synthetase family. IleS type 1 subfamily. As to quaternary structure, monomer. Zn(2+) is required as a cofactor.

The protein localises to the cytoplasm. The enzyme catalyses tRNA(Ile) + L-isoleucine + ATP = L-isoleucyl-tRNA(Ile) + AMP + diphosphate. Catalyzes the attachment of isoleucine to tRNA(Ile). As IleRS can inadvertently accommodate and process structurally similar amino acids such as valine, to avoid such errors it has two additional distinct tRNA(Ile)-dependent editing activities. One activity is designated as 'pretransfer' editing and involves the hydrolysis of activated Val-AMP. The other activity is designated 'posttransfer' editing and involves deacylation of mischarged Val-tRNA(Ile). This Mycoplasma mobile (strain ATCC 43663 / 163K / NCTC 11711) (Mesomycoplasma mobile) protein is Isoleucine--tRNA ligase.